The chain runs to 261 residues: Tyrosine phosphatase-like protein H5 (261 aa).

One can recognise a Tyrosine-protein phosphatase domain in the interval 26–261; sequence LIKKEHDKVL…ESVEQEYFVP (236 aa).

Belongs to the protein-tyrosine phosphatase family.

The sequence is that of Tyrosine phosphatase-like protein H5 (H6) from Microplitis demolitor bracovirus (isolate Webb) (MdBV).